The sequence spans 637 residues: Chaperone protein HtpG (637 aa).

The interval 1–345 is a; substrate-binding; that stretch reads MSQQETHGFQ…SNDLPLNVSR (345 aa). Residues 346 to 562 are b; the sequence is EILQDNHVTK…EGEMSTQMIK (217 aa). Residues 563 to 637 form a c region; the sequence is LMQAAGQPVP…MNQMLLANMK (75 aa).

It belongs to the heat shock protein 90 family. In terms of assembly, homodimer.

The protein localises to the cytoplasm. Molecular chaperone. Has ATPase activity. The polypeptide is Chaperone protein HtpG (Shewanella baltica (strain OS185)).